The chain runs to 622 residues: Low affinity potassium transport system protein Kup (622 aa).

12 helical membrane passes run 9 to 29 (LPAITLAAIGVVYGDIGTSPL), 49 to 69 (VFGFLSLIFWLLIFVVSIKYL), 103 to 123 (VIMGLIGGSFFYGEVVITPAI), 137 to 157 (PQLDTWIVPLSIIVLTLLFMI), 165 to 185 (VGKLFAPIMLTWFLILAGLGL), 213 to 233 (VSFIALGAVVLSITGGEALYA), 247 to 267 (WFTVVLPSLTLNYFGQGALLL), 276 to 296 (PFFLLAPDWALIPLLIIAALA), 337 to 357 (IYIPFVNWMLYVAVVIVIVSF), 363 to 383 (LAAAYGIAVTGTMVLTSILST), 396 to 416 (FVALILIAFLCVDIPLFTANL), and 419 to 439 (LLSGGWLPLSLGTVMFIVMTT).

The protein belongs to the HAK/KUP transporter (TC 2.A.72) family.

Its subcellular location is the cell inner membrane. It catalyses the reaction K(+)(in) + H(+)(in) = K(+)(out) + H(+)(out). Functionally, responsible for the low-affinity transport of potassium into the cell. Likely operates as a K(+):H(+) symporter. The chain is Low affinity potassium transport system protein Kup from Shigella flexneri serotype 5b (strain 8401).